A 220-amino-acid polypeptide reads, in one-letter code: Large ribosomal subunit protein uL3 (220 aa).

It belongs to the universal ribosomal protein uL3 family. In terms of assembly, part of the 50S ribosomal subunit. Forms a cluster with proteins L14 and L19.

One of the primary rRNA binding proteins, it binds directly near the 3'-end of the 23S rRNA, where it nucleates assembly of the 50S subunit. This Staphylococcus carnosus (strain TM300) protein is Large ribosomal subunit protein uL3.